We begin with the raw amino-acid sequence, 297 residues long: Protoheme IX farnesyltransferase (297 aa).

A run of 9 helical transmembrane segments spans residues 16–36, 45–65, 93–113, 114–134, 141–161, 172–192, 223–243, 244–264, and 277–297; these read VVAL…PGVP, VLGF…NQLL, VFAS…VNLI, TAVL…VYLK, IVIG…AVTG, SLLV…LAIF, VVLA…AFYL, GGAI…LDPP, and IVYL…LPWL.

It belongs to the UbiA prenyltransferase family. Protoheme IX farnesyltransferase subfamily.

It localises to the cell inner membrane. It catalyses the reaction heme b + (2E,6E)-farnesyl diphosphate + H2O = Fe(II)-heme o + diphosphate. It functions in the pathway porphyrin-containing compound metabolism; heme O biosynthesis; heme O from protoheme: step 1/1. Converts heme B (protoheme IX) to heme O by substitution of the vinyl group on carbon 2 of heme B porphyrin ring with a hydroxyethyl farnesyl side group. This chain is Protoheme IX farnesyltransferase, found in Stenotrophomonas maltophilia (strain R551-3).